A 410-amino-acid chain; its full sequence is Sorting nexin-4 (410 aa).

A PX domain is found at 11-135 (FIIVSDPQKQ…TFLVSSDWDA (125 aa)). Positions 58, 60, 84, and 101 each coordinate a 1,2-diacyl-sn-glycero-3-phospho-(1D-myo-inositol-3-phosphate). Positions 329–368 (NQEAARREKISKLESKVQALTTEVENAKKVADAFEKEALK) form a coiled coil.

It belongs to the sorting nexin family.

Its subcellular location is the cytoplasm. It localises to the cytosol. It is found in the preautophagosomal structure membrane. The protein localises to the endosome membrane. Its function is as follows. Sorting nexin, involved in the separation or division of vacuoles throughout the entire life cycle of the cells. Involved in retrieval of late-Golgi SNAREs from post-Golgi endosomes to the trans-Golgi network, for cytoplasm to vacuole transport (Cvt), and autophagy of large cargos including mitophagy, pexophagy and glycophagy. In Eremothecium gossypii (strain ATCC 10895 / CBS 109.51 / FGSC 9923 / NRRL Y-1056) (Yeast), this protein is Sorting nexin-4 (SNX4).